The following is a 431-amino-acid chain: CinA-like protein (431 aa).

This sequence belongs to the CinA family.

The sequence is that of CinA-like protein from Chlorobium luteolum (strain DSM 273 / BCRC 81028 / 2530) (Pelodictyon luteolum).